The following is a 222-amino-acid chain: Protein-L-isoaspartate O-methyltransferase (222 aa).

The active site involves serine 67.

The protein belongs to the methyltransferase superfamily. L-isoaspartyl/D-aspartyl protein methyltransferase family.

It is found in the cytoplasm. It carries out the reaction [protein]-L-isoaspartate + S-adenosyl-L-methionine = [protein]-L-isoaspartate alpha-methyl ester + S-adenosyl-L-homocysteine. Its function is as follows. Catalyzes the methyl esterification of L-isoaspartyl residues in peptides and proteins that result from spontaneous decomposition of normal L-aspartyl and L-asparaginyl residues. It plays a role in the repair and/or degradation of damaged proteins. This is Protein-L-isoaspartate O-methyltransferase from Parvibaculum lavamentivorans (strain DS-1 / DSM 13023 / NCIMB 13966).